Consider the following 152-residue polypeptide: 17.1 kDa class II heat shock protein (152 aa).

Residues 36–152 enclose the sHSP domain; sequence DAKAMAATPA…KPKTIQVKVA (117 aa).

The protein belongs to the small heat shock protein (HSP20) family.

The protein localises to the cytoplasm. The chain is 17.1 kDa class II heat shock protein (HSP17.7) from Pisum sativum (Garden pea).